The sequence spans 333 residues: Beta-ketoacyl-[acyl-carrier-protein] synthase III (333 aa).

Active-site residues include Cys114 and His255. Residues 256–260 are ACP-binding; that stretch reads QANYR. Residue Asn285 is part of the active site.

This sequence belongs to the thiolase-like superfamily. FabH family. In terms of assembly, homodimer.

Its subcellular location is the cytoplasm. The catalysed reaction is malonyl-[ACP] + acetyl-CoA + H(+) = 3-oxobutanoyl-[ACP] + CO2 + CoA. Its pathway is lipid metabolism; fatty acid biosynthesis. Its function is as follows. Catalyzes the condensation reaction of fatty acid synthesis by the addition to an acyl acceptor of two carbons from malonyl-ACP. Catalyzes the first condensation reaction which initiates fatty acid synthesis and may therefore play a role in governing the total rate of fatty acid production. Possesses both acetoacetyl-ACP synthase and acetyl transacylase activities. Its substrate specificity determines the biosynthesis of branched-chain and/or straight-chain of fatty acids. The chain is Beta-ketoacyl-[acyl-carrier-protein] synthase III from Aliarcobacter butzleri (strain RM4018) (Arcobacter butzleri).